The chain runs to 545 residues: Glucose-6-phosphate isomerase (545 aa).

Glu-351 serves as the catalytic Proton donor. Residues His-382 and Lys-510 contribute to the active site.

This sequence belongs to the GPI family.

It localises to the cytoplasm. The enzyme catalyses alpha-D-glucose 6-phosphate = beta-D-fructose 6-phosphate. It functions in the pathway carbohydrate biosynthesis; gluconeogenesis. The protein operates within carbohydrate degradation; glycolysis; D-glyceraldehyde 3-phosphate and glycerone phosphate from D-glucose: step 2/4. In terms of biological role, catalyzes the reversible isomerization of glucose-6-phosphate to fructose-6-phosphate. This is Glucose-6-phosphate isomerase from Helicobacter pylori (strain ATCC 700392 / 26695) (Campylobacter pylori).